A 296-amino-acid chain; its full sequence is (+)-neomenthol dehydrogenase (296 aa).

16 to 40 serves as a coordination point for NADP(+); the sequence is RGIGFEICRQLASEGIRVVLTSRDE. Ser164 contacts substrate. Catalysis depends on Tyr220, which acts as the Proton acceptor.

The protein belongs to the short-chain dehydrogenases/reductases (SDR) family. In terms of assembly, monomer.

It is found in the cytoplasm. The enzyme catalyses (+)-neomenthol + NADP(+) = (1R,4S)-menthone + NADPH + H(+). Its function is as follows. Aldehyde reductase that catalyzes the reduction of the aldehyde carbonyl groups on saturated and alpha,beta-unsaturated aldehydes with more than 5 carbons. Involved in basal resistance against pathogens. This Arabidopsis thaliana (Mouse-ear cress) protein is (+)-neomenthol dehydrogenase (SDR1).